A 1896-amino-acid polypeptide reads, in one-letter code: Trinucleotide repeat-containing gene 6A protein (1896 aa).

2 stretches are compositionally biased toward basic and acidic residues: residues 1–21 (MREL…RDLV) and 39–57 (KKKE…KVPE). 4 disordered regions span residues 1–137 (MREL…LLKR), 159–209 (SESS…DCST), 222–250 (EAWP…SESE), and 257–276 (ASGN…GLGS). The tract at residues 1–917 (MRELEAKATK…GDPPKCNQSL (917 aa)) is interaction with argonaute family proteins. Low complexity-rich tracts occupy residues 69–93 (ANSD…ASNQ) and 101–113 (QQPQ…QQPQ). Residues 125–137 (RFRHQEHKQLLKR) show a composition bias toward basic residues. The tract at residues 239-488 (IDADSASNSE…QAPSVMNGTS (250 aa)) is sufficient for interaction with AGO1, AGO3 and AGO4. Sufficient for interaction with AGO2 stretches follow at residues 255–331 (VMAS…NAWG), 303–384 (GALI…STIG), 325–424 (NRMN…KVSF), 394–480 (SKVS…QIQA), and 487–736 (TSLS…NGTE). 2 stretches are compositionally biased toward polar residues: residues 396-410 (VSGS…SLQE) and 417-429 (SGTQ…GQPQ). Disordered stretches follow at residues 396–461 (VSGS…NELP), 548–683 (FQVN…RRKI), 703–998 (LSNS…DPSK), 1011–1126 (IPEA…PTGW), and 1143–1182 (QELN…NKQE). Residues 430–443 (NITTETTGPNNTTN) are compositionally biased toward low complexity. Polar residues predominate over residues 444-461 (FMTSSLPNSGSVQNNELP). A sufficient for interaction with AGO1 and AGO4 region spans residues 551-1279 (NTNKGGGVWE…MFGVGNTAAQ (729 aa)). Positions 573–584 (SGNGANSGGSRR) are enriched in gly residues. Polar residues-rich tracts occupy residues 591–617 (QNTG…SANG) and 635–647 (GSAT…QNSV). The span at 665-683 (GRLEEKVTGESQSRDRRKI) shows a compositional bias: basic and acidic residues. The span at 703–722 (LSNSGWGQTPIKQNTAWDTE) shows a compositional bias: polar residues. Positions 723–733 (TSPRGERKTDN) are enriched in basic and acidic residues. Phosphoserine is present on serine 724. Residues 738 to 766 (WGSSATQTFNSGACTDKTSPNSNDTSSVS) are compositionally biased toward polar residues. Over residues 858–871 (SSSGGSDSDRSISG) the composition is skewed to low complexity. Serine 863 is modified (phosphoserine). Polar residues-rich tracts occupy residues 876-906 (GKTS…SSQG) and 924-937 (KPVS…QQDI). Phosphoserine is present on serine 976. Polar residues-rich tracts occupy residues 1033-1042 (AVSSKETSSG), 1054-1064 (TPATTVDNGTS), and 1082-1105 (AASN…SGPK). Positions 1059–1129 (VDNGTSAWGK…GSRPTGWEEE (71 aa)) are sufficient for interaction with AGO2. The span at 1143–1163 (QELNSSLNWPPYTKKMSSKGL) shows a compositional bias: low complexity. Phosphoserine is present on residues serine 1197 and serine 1255. Disordered regions lie at residues 1234–1256 (GDYN…ESSM), 1273–1306 (VGNT…PPPL), and 1360–1395 (QRAQ…QSRQ). 2 stretches are compositionally biased toward low complexity: residues 1284–1296 (QQPP…SSQP) and 1360–1376 (QRAQ…RQQQ). At threonine 1406 the chain carries Phosphothreonine. Disordered regions lie at residues 1512-1570 (MNSS…VTPG) and 1659-1685 (PKNI…WDNS). Phosphoserine is present on serine 1520. A sufficient for interaction with AGO2 region spans residues 1605–1896 (TSAWSSIRAS…DHLGGGGESM (292 aa)). Positions 1716–1788 (NWLVLKNLTP…TTILAEFASE (73 aa)) constitute an RRM domain. Phosphoserine is present on residues serine 1804 and serine 1825.

The protein belongs to the GW182 family. In terms of assembly, interacts with AGO2. Interacts with AGO1, AGO3 and AGO4. Interacts with CNOT1; the interaction is direct and mediates the association with the CCR4-NOT complex. Interacts with ZC3H12A. Interacts with SND1. Interacts with GARRE1.

The protein localises to the cytoplasm. Its subcellular location is the P-body. In terms of biological role, plays a role in RNA-mediated gene silencing by both micro-RNAs (miRNAs) and short interfering RNAs (siRNAs). Required for miRNA-dependent repression of translation and for siRNA-dependent endonucleolytic cleavage of complementary mRNAs by argonaute family proteins. As a scaffolding protein, associates with argonaute proteins bound to partially complementary mRNAs, and can simultaneously recruit CCR4-NOT and PAN deadenylase complexes. In Mus musculus (Mouse), this protein is Trinucleotide repeat-containing gene 6A protein (Tnrc6a).